The primary structure comprises 172 residues: Disulfide bond formation protein B (172 aa).

The Cytoplasmic segment spans residues M1–Q11. A helical membrane pass occupies residues F12–Y28. The Periplasmic portion of the chain corresponds to V29–I46. A disulfide bridge connects residues C38 and C41. A helical membrane pass occupies residues A47–P63. The Cytoplasmic segment spans residues R64–K70. A helical membrane pass occupies residues V71–A88. Topologically, residues R89–M145 are periplasmic. C104 and C131 form a disulfide bridge. The chain crosses the membrane as a helical span at residues W146–K164. Over A165–H172 the chain is Cytoplasmic.

The protein belongs to the DsbB family.

It localises to the cell inner membrane. Its function is as follows. Required for disulfide bond formation in some periplasmic proteins. Acts by oxidizing the DsbA protein. The chain is Disulfide bond formation protein B from Xanthomonas euvesicatoria pv. vesicatoria (strain 85-10) (Xanthomonas campestris pv. vesicatoria).